Here is a 163-residue protein sequence, read N- to C-terminus: Type VII secretion system protein EsaG (163 aa).

Interacts with EssD (via C-terminus). Interacts with EssE.

Its subcellular location is the cytoplasm. Its function is as follows. Component of the type VII secretion system (Ess). Also acts as part of toxin-antitoxin system. Counteracts the toxic effect of EssD via direct interaction. The chain is Type VII secretion system protein EsaG from Staphylococcus aureus (strain NCTC 8325 / PS 47).